The primary structure comprises 155 residues: Ribonuclease H (155 aa).

In terms of domain architecture, RNase H type-1 spans 1–142; it reads MLKQVEIFTD…CDELARAAAM (142 aa). Residues aspartate 10, glutamate 48, aspartate 70, and aspartate 134 each coordinate Mg(2+).

Belongs to the RNase H family. In terms of assembly, monomer. Mg(2+) is required as a cofactor.

It is found in the cytoplasm. The catalysed reaction is Endonucleolytic cleavage to 5'-phosphomonoester.. Functionally, endonuclease that specifically degrades the RNA of RNA-DNA hybrids. The polypeptide is Ribonuclease H (Escherichia coli (strain 55989 / EAEC)).